The primary structure comprises 503 residues: Galactose/methyl galactoside import ATP-binding protein MglA 2 (503 aa).

ABC transporter domains lie at 11 to 246 (LEMT…VGRE) and 257 to 503 (TPKE…SRYL). Residue 43–50 (GENGAGKS) coordinates ATP.

This sequence belongs to the ABC transporter superfamily. Galactose/methyl galactoside importer (TC 3.A.1.2.3) family. As to quaternary structure, the complex is composed of one ATP-binding protein (MglA), two transmembrane proteins (MglC) and a solute-binding protein (MglB).

The protein localises to the cell inner membrane. The enzyme catalyses D-galactose(out) + ATP + H2O = D-galactose(in) + ADP + phosphate + H(+). The catalysed reaction is methyl beta-D-galactoside(out) + ATP + H2O = methyl beta-D-galactoside(in) + ADP + phosphate + H(+). Part of the ABC transporter complex MglABC involved in galactose/methyl galactoside import. Responsible for energy coupling to the transport system. This Photobacterium profundum (strain SS9) protein is Galactose/methyl galactoside import ATP-binding protein MglA 2.